Here is a 214-residue protein sequence, read N- to C-terminus: Adenylate kinase (214 aa).

10–15 lines the ATP pocket; that stretch reads GAGKGT. The tract at residues 30 to 59 is NMP; the sequence is STGDMFRAAVKNETPLGLEAKSYMDKGHLV. Residues threonine 31, arginine 36, 57 to 59, 85 to 88, and glutamine 92 each bind AMP; these read HLV and GFPR. The LID stretch occupies residues 126–163; it reads GRWICPVCGASYHTMFNPPKEAGVCDKDGGKLYQREDD. Arginine 127 lines the ATP pocket. Residues cysteine 130 and cysteine 133 each contribute to the Zn(2+) site. 136–137 contacts ATP; it reads SY. 2 residues coordinate Zn(2+): cysteine 150 and aspartate 153. Residues arginine 160 and arginine 171 each contribute to the AMP site. Glutamine 199 serves as a coordination point for ATP.

This sequence belongs to the adenylate kinase family. Monomer.

The protein localises to the cytoplasm. It carries out the reaction AMP + ATP = 2 ADP. It participates in purine metabolism; AMP biosynthesis via salvage pathway; AMP from ADP: step 1/1. Catalyzes the reversible transfer of the terminal phosphate group between ATP and AMP. Plays an important role in cellular energy homeostasis and in adenine nucleotide metabolism. This Brevibacillus brevis (strain 47 / JCM 6285 / NBRC 100599) protein is Adenylate kinase.